Reading from the N-terminus, the 331-residue chain is Laforin (331 aa).

In terms of domain architecture, CBM20 spans 1–124; the sequence is MRFRFGVVVP…NNLVDGVYCL (124 aa). The residue at position 25 (S25) is a Phosphoserine; by AMPK. Residues W32, K87, 103–107, D197, D235, and R241 contribute to the substrate site; that span reads GPHHD. The region spanning 156–323 is the Tyrosine-protein phosphatase domain; sequence HYSRILPNIW…QEDFFQKFGK (168 aa). The active-site Phosphocysteine intermediate is the C266. The Glucan phosphatase signature motif CXAGXGR motif lies at 266-272; sequence CNAGVGR. Substrate contacts are provided by residues 267 to 272 and Y304; that span reads NAGVGR.

The protein belongs to the protein-tyrosine phosphatase family. Homodimer. Interacts with itself. Interacts with PPP1R3B, PPP1R3C, PPP1R3D, HIRIP5, and EPM2AIP1. Binds glycogen and Lafora bodies. Interacts with NHLRC1/malin (via the NHL repeats). Forms a complex with NHLRC1/malin and HSP70. Interacts with PPP1R3D; in the presence of NHLC1/malin the interaction leads to ubiquitination and autophagic degradation of PPP1R3D. Interacts (via the phosphatase domain) with MAPT/Tau; the interaction dephosphorylates MAPT. Isoform 1 and isoform 2 interact to form a heterodimeric complex that lacks phosphatase activity (in vitro). Active phosphatase isoform 7 and isoform 1 interact with each other, but give rise to lower phosphatase activity than isoform 1 or isoform 7 by themselves (in vitro). Active phosphatase isoform 7 and inactive isoform 2 interact with each other, but give rise to lower phosphatase activity than isoform 7 by itself (in vitro). Interacts with PRDM8. Post-translationally, polyubiquitinated by NHLRC1/malin. Phosphorylation on Ser-25 by AMPK affects the phosphatase activity of the enzyme and its ability to homodimerize and interact with NHLRC1, PPP1R3C or PRKAA2. As to expression, expressed in heart, skeletal muscle, kidney, pancreas and brain. Isoform 4 is also expressed in the placenta.

It localises to the cytoplasm. The protein localises to the endoplasmic reticulum membrane. It is found in the cell membrane. The protein resides in the nucleus. It carries out the reaction O-phospho-L-tyrosyl-[protein] + H2O = L-tyrosyl-[protein] + phosphate. The enzyme catalyses O-phospho-L-seryl-[protein] + H2O = L-seryl-[protein] + phosphate. The catalysed reaction is O-phospho-L-threonyl-[protein] + H2O = L-threonyl-[protein] + phosphate. Its function is as follows. Plays an important role in preventing glycogen hyperphosphorylation and the formation of insoluble aggregates, via its activity as glycogen phosphatase, and by promoting the ubiquitination of proteins involved in glycogen metabolism via its interaction with the E3 ubiquitin ligase NHLRC1/malin. Shows strong phosphatase activity towards complex carbohydrates in vitro, avoiding glycogen hyperphosphorylation which is associated with reduced branching and formation of insoluble aggregates. Dephosphorylates phosphotyrosine and synthetic substrates, such as para-nitrophenylphosphate (pNPP), and has low activity with phosphoserine and phosphothreonine substrates (in vitro). Has been shown to dephosphorylate MAPT. Forms a complex with NHLRC1/malin and HSP70, which suppresses the cellular toxicity of misfolded proteins by promoting their degradation through the ubiquitin-proteasome system (UPS). Acts as a scaffold protein to facilitate PPP1R3C/PTG ubiquitination by NHLRC1/malin. Also promotes proteasome-independent protein degradation through the macroautophagy pathway. Does not bind to glycogen. Lacks phosphatase activity and might function as a dominant-negative regulator for the phosphatase activity of isoform 1 and isoform 7. In terms of biological role, has phosphatase activity (in vitro). The protein is Laforin (EPM2A) of Homo sapiens (Human).